Here is a 213-residue protein sequence, read N- to C-terminus: Deoxyribose-phosphate aldolase (213 aa).

Asp89 (proton donor/acceptor) is an active-site residue. The active-site Schiff-base intermediate with acetaldehyde is Lys151. Residue Lys180 is the Proton donor/acceptor of the active site.

This sequence belongs to the DeoC/FbaB aldolase family. DeoC type 1 subfamily.

It localises to the cytoplasm. The enzyme catalyses 2-deoxy-D-ribose 5-phosphate = D-glyceraldehyde 3-phosphate + acetaldehyde. It participates in carbohydrate degradation; 2-deoxy-D-ribose 1-phosphate degradation; D-glyceraldehyde 3-phosphate and acetaldehyde from 2-deoxy-alpha-D-ribose 1-phosphate: step 2/2. Its function is as follows. Catalyzes a reversible aldol reaction between acetaldehyde and D-glyceraldehyde 3-phosphate to generate 2-deoxy-D-ribose 5-phosphate. The protein is Deoxyribose-phosphate aldolase of Finegoldia magna (strain ATCC 29328 / DSM 20472 / WAL 2508) (Peptostreptococcus magnus).